The chain runs to 636 residues: TNFAIP3-interacting protein 1 (636 aa).

A coiled-coil region spans residues 20–73; it reads EASAAFERLVKENSRLKEKMQGIKMLGELLEESQMEATRLRQKAEELVKDNELL. Residues 61–71 are compositionally biased toward basic and acidic residues; it reads QKAEELVKDNE. Disordered stretches follow at residues 61-151 and 252-283; these read QKAE…GPLP and MSNGNKEGASGRPGSPKMEGTGKKAVAGQQQA. Ser77 is subject to Phosphoserine. The interval 94–412 is interaction with Nef; sequence SNVTASPTAP…SPLTRQREYQ (319 aa). Over residues 131-142 the composition is skewed to polar residues; it reads EEQNSPESSSHA. A coiled-coil region spans residues 196-258; that stretch reads SKVHKNEQRT…KLLMSNGNKE (63 aa). Residue Ser284 is modified to Phosphoserine. Residues 294–535 are a coiled coil; the sequence is VALGAAEKKV…RKAKASGERY (242 aa). The interaction with Shigella flexneri ipah9.8 stretch occupies residues 351–367; it reads DLEAEREQKQRDFDRKL. Ser403 carries the post-translational modification Phosphoserine. Positions 431–588 are required for inhibitory activity of TNF-induced NF-kappa-B activation; sequence TPPSSPPTAF…MEHPPPLPNS (158 aa). Thr438 carries the phosphothreonine modification. Ser442 is subject to Phosphoserine. The ubiquitin-binding domain (UBD) stretch occupies residues 452-510; sequence KQELVTQNELLKQQVKIFEEDFQRERSDRERMNEEKEELKKQVEKLQAQVTLSNAQLKA. The Nuclear localization signal signature appears at 524–530; that stretch reads QKRKAKA. Residue Tyr552 is modified to Phosphotyrosine. Position 571 is an asymmetric dimethylarginine (Arg571). Position 599 is an asymmetric dimethylarginine; alternate (Arg599). An Omega-N-methylarginine; alternate modification is found at Arg599. Positions 603–636 are disordered; the sequence is GGVRNPNQSSQVMDPPTARPTEPESPKNDREGPQ. The segment covering 623–636 has biased composition (basic and acidic residues); the sequence is TEPESPKNDREGPQ. Position 627 is a phosphoserine (Ser627).

As to quaternary structure, interacts with TNFAIP3 and IKBKG (polyubiquitinated); facilitates TNFAIP3-mediated de-ubiquitination of NEMO/IKBKG. Interacts with polyubiquitin. Interacts with MAPK1, SELPLG and PIK3CD. Interacts with IRAK1 (polyubiquitinated). Interacts with MYD88; the interaction is indicative for participation in an activated TLR-signaling complex. Interacts with HIV-1 matrix protein. Interacts with TAX1BP1. (Microbial infection) Interacts with Shigella flexneri ipah9.8; the interaction promotes polyubiquitination of IKBKG. Phosphorylation at Tyr-552 by SRC-family kinases recruits phosphoinositide-3-kinase (PI3K) PIK3CD:p85 heterodimer which results in integrin activation and leukocyte adhesion to activated endothelium during inflammation. As to expression, ubiquitous. Strongly expressed in peripheral blood lymphocytes, spleen and skeletal muscle, and is weakly expressed in the brain. In peripheral blood mononucleocytes, isoform 4 is mainly expressed and isoform 1 and isoform 7 are almost not expressed. Expression of isoform 1 and isoform 7 increases in leukemic cells.

It localises to the cytoplasm. The protein localises to the nucleus. Its function is as follows. Inhibits NF-kappa-B activation and TNF-induced NF-kappa-B-dependent gene expression by regulating TAX1BP1 and A20/TNFAIP3-mediated deubiquitination of IKBKG; proposed to link A20/TNFAIP3 to ubiquitinated IKBKG. Involved in regulation of EGF-induced ERK1/ERK2 signaling pathway; blocks MAPK3/MAPK1 nuclear translocation and MAPK1-dependent transcription. Increases cell surface CD4(T4) antigen expression. Involved in the anti-inflammatory response of macrophages and positively regulates TLR-induced activation of CEBPB. Involved in the prevention of autoimmunity; this function implicates binding to polyubiquitin. Involved in leukocyte integrin activation during inflammation; this function is mediated by association with SELPLG and dependent on phosphorylation by SRC-family kinases. Interacts with HIV-1 matrix protein and is packaged into virions and overexpression can inhibit viral replication. May regulate matrix nuclear localization, both nuclear import of PIC (Preintegration complex) and export of GAG polyprotein and viral genomic RNA during virion production. In case of infection, promotes association of IKBKG with Shigella flexneri E3 ubiquitin-protein ligase ipah9.8 p which in turn promotes polyubiquitination of IKBKG leading to its proteasome-dependent degradation and thus is perturbing NF-kappa-B activation during bacterial infection. The chain is TNFAIP3-interacting protein 1 (TNIP1) from Homo sapiens (Human).